A 100-amino-acid chain; its full sequence is Elicitin Vex2 (100 aa).

3 disulfide bridges follow: C3-C71, C27-C56, and C51-C95.

Belongs to the elicitin family.

The protein resides in the secreted. Functionally, induces local and distal defense responses (incompatible hypersensitive reaction) in plants from the solanaceae and cruciferae families. Elicits leaf necrosis and causes the accumulation of pathogenesis-related proteins. Might interact with the lipidic molecules of the plasma membrane. This is Elicitin Vex2 from Phytopythium vexans (Damping-off fungus).